The primary structure comprises 451 residues: MSIQSGEILETVKMVADQNFDVRTITIGIDLHDCISSDINVLNQNIYNKITTVGKDLVTTAKYLSAKYGVPIVNQRISVTPIAQIAAATHADSYVSVAQTLDKAAKAIGVSFIGGFSALVQKGMSPSDEVLIRSIPEAMKTTDIVCSSINIGSTRAGINMDAVKLAGETVKRTAEITPEGFGCAKIVVFCNAVEDNPFMAGAFHGSGEADAVINVGVSGPGVVKAALENSDATTLTEVAEVVKKTAFKITRVGELIGREASKMLNIPFGILDLSLAPTPAVGDSVARILEEMGLSVCGTHGTTAALALLNDAVKKGGMMASSAVGGLSGAFIPVSEDEGMIAAAEAGVLTLDKLEAMTAVCSVGLDMIAVPGDTPAHTISGIIADEAAIGMINSKTTAVRIIPVTGKTVGDSVEFGGLLGYAPVMPVKEGSCEVFVNRGGRIPAPVQSMKN.

This sequence belongs to the UPF0210 family. Homodimer.

The protein is UPF0210 protein NMB1652 of Neisseria meningitidis serogroup B (strain ATCC BAA-335 / MC58).